Consider the following 1201-residue polypeptide: Vitamin B12-dependent ribonucleotide reductase (1201 aa).

Substrate contacts are provided by residues Ser153, 198–199 (AC), Gly230, 482–486 (NPCSE), and 683–687 (PTGTI). Cys199 and Cys495 are disulfide-bonded. Asn482 serves as the catalytic Proton acceptor. Cys484 acts as the Cysteine radical intermediate in catalysis. Glu486 functions as the Proton acceptor in the catalytic mechanism. Basic and acidic residues predominate over residues 1100 to 1118 (DEIGSKRATAESNGQEKET). The interval 1100 to 1120 (DEIGSKRATAESNGQEKETLS) is disordered.

It belongs to the ribonucleoside diphosphate reductase class-2 family. Requires adenosylcob(III)alamin as cofactor.

The catalysed reaction is a 2'-deoxyribonucleoside 5'-diphosphate + [thioredoxin]-disulfide + H2O = a ribonucleoside 5'-diphosphate + [thioredoxin]-dithiol. In terms of biological role, catalyzes the reduction of ribonucleotides to deoxyribonucleotides. May function to provide a pool of deoxyribonucleotide precursors for DNA repair during oxygen limitation and/or for immediate growth after restoration of oxygen. This is Vitamin B12-dependent ribonucleotide reductase (nrdJ) from Leptospira interrogans serogroup Icterohaemorrhagiae serovar copenhageni (strain Fiocruz L1-130).